Reading from the N-terminus, the 115-residue chain is UPF0738 protein SERP0585 (115 aa).

Belongs to the UPF0738 family.

The sequence is that of UPF0738 protein SERP0585 from Staphylococcus epidermidis (strain ATCC 35984 / DSM 28319 / BCRC 17069 / CCUG 31568 / BM 3577 / RP62A).